The sequence spans 132 residues: Glycine cleavage system H protein (132 aa).

Residues 24 to 106 (TVRVGLTDFA…YGAGWLLDVH (83 aa)) enclose the Lipoyl-binding domain. Lys-65 carries the post-translational modification N6-lipoyllysine.

Belongs to the GcvH family. The glycine cleavage system is composed of four proteins: P, T, L and H. The cofactor is (R)-lipoate.

Its function is as follows. The glycine cleavage system catalyzes the degradation of glycine. The H protein shuttles the methylamine group of glycine from the P protein to the T protein. The sequence is that of Glycine cleavage system H protein from Mycobacterium leprae (strain Br4923).